Here is a 101-residue protein sequence, read N- to C-terminus: Small ribosomal subunit protein uS14 (101 aa).

Belongs to the universal ribosomal protein uS14 family. Part of the 30S ribosomal subunit. Contacts proteins S3 and S10.

Its function is as follows. Binds 16S rRNA, required for the assembly of 30S particles and may also be responsible for determining the conformation of the 16S rRNA at the A site. This Citrobacter koseri (strain ATCC BAA-895 / CDC 4225-83 / SGSC4696) protein is Small ribosomal subunit protein uS14.